Consider the following 337-residue polypeptide: Putative 2-aminoethylphosphonate-binding periplasmic protein (337 aa).

Residues 1–21 form the signal peptide; that stretch reads MKLSRLALLSVFALASAPSWA.

Belongs to the bacterial solute-binding protein 1 family.

It localises to the periplasm. Its function is as follows. Probably part of the PhnSTUV complex (TC 3.A.1.11.5) involved in 2-aminoethylphosphonate import. The sequence is that of Putative 2-aminoethylphosphonate-binding periplasmic protein (phnS) from Salmonella typhi.